We begin with the raw amino-acid sequence, 297 residues long: Nucleotide-binding protein BTH_I0482 (297 aa).

An ATP-binding site is contributed by 8–15; it reads GISGSGKS. 57–60 serves as a coordination point for GTP; sequence DARS.

The protein belongs to the RapZ-like family.

Its function is as follows. Displays ATPase and GTPase activities. This Burkholderia thailandensis (strain ATCC 700388 / DSM 13276 / CCUG 48851 / CIP 106301 / E264) protein is Nucleotide-binding protein BTH_I0482.